The sequence spans 845 residues: Poly(A) RNA polymerase gld-4 (845 aa).

Positions 1-55 are disordered; the sequence is MNEDSRLSSSQQPSTSTPRSSIPSTMNSDEPNTCRRLSQSQEQPSTSRTCKSETP. Residues 7 to 25 show a composition bias toward low complexity; the sequence is LSSSQQPSTSTPRSSIPST. Over residues 26–49 the composition is skewed to polar residues; that stretch reads MNSDEPNTCRRLSQSQEQPSTSRT. Mg(2+)-binding residues include Asp139 and Asp141. A PAP-associated domain is found at 276-335; it reads NLGHLLLRFLELYSLEFNFEEMGISPGQCCYIPKSASGARYGHKQAQPGNLALEDPLLTA. Basic and acidic residues predominate over residues 482–506; that stretch reads KSLEKMPACDDNKKEEELVATRETD. Disordered regions lie at residues 482–733 and 788–845; these read KSLE…SEEP and NALT…RLQR. A compositionally biased stretch (low complexity) spans 535-551; that stretch reads TSTQSVNTSATVSTAAS. Composition is skewed to polar residues over residues 561 to 571 and 579 to 588; these read PGLSSSMGNQS and GINNRNNSAV. Basic and acidic residues predominate over residues 605-620; the sequence is RESKRTQTTSEDKMQD. Basic residues predominate over residues 643 to 653; that stretch reads SHKHRNAHPQR. Composition is skewed to polar residues over residues 654–666, 695–732, 788–805, and 819–828; these read QRPS…QGSD, RQQT…SSEE, NALT…TSMQ, and DNNSATSSTD.

Interacts with gls-1 isoform C. Mg(2+) serves as cofactor. Requires Mn(2+) as cofactor. As to expression, germline-specific.

Its subcellular location is the cytoplasm. It localises to the cytoplasmic granule. The protein localises to the perinuclear region. It carries out the reaction RNA(n) + ATP = RNA(n)-3'-adenine ribonucleotide + diphosphate. In terms of biological role, cytoplasmic poly(A) RNA polymerase that adds successive AMP monomers to the 3'-end of specific RNAs, forming a poly(A) tail. The enzymatic activity is enhanced by its interaction with gls-1. Required, together with gld-2, for early meiotic progression in male and female germ cells and for gld-1 protein accumulation in the hermaphrodite germline. In the germline, forms a complex with gls-1 which directly binds to gld-1 mRNA and prevents its degradation. In Caenorhabditis elegans, this protein is Poly(A) RNA polymerase gld-4.